The chain runs to 104 residues: Nucleoid-associated protein DICTH_1981 (104 aa).

The segment at K85–F104 is disordered.

This sequence belongs to the YbaB/EbfC family. Homodimer.

It is found in the cytoplasm. The protein resides in the nucleoid. Functionally, binds to DNA and alters its conformation. May be involved in regulation of gene expression, nucleoid organization and DNA protection. The sequence is that of Nucleoid-associated protein DICTH_1981 from Dictyoglomus thermophilum (strain ATCC 35947 / DSM 3960 / H-6-12).